The primary structure comprises 196 residues: Large ribosomal subunit protein bL25 (196 aa).

Belongs to the bacterial ribosomal protein bL25 family. CTC subfamily. As to quaternary structure, part of the 50S ribosomal subunit; part of the 5S rRNA/L5/L18/L25 subcomplex. Contacts the 5S rRNA. Binds to the 5S rRNA independently of L5 and L18.

Functionally, this is one of the proteins that binds to the 5S RNA in the ribosome where it forms part of the central protuberance. The chain is Large ribosomal subunit protein bL25 from Geotalea daltonii (strain DSM 22248 / JCM 15807 / FRC-32) (Geobacter daltonii).